The following is a 463-amino-acid chain: Thiamine-repressible acid phosphatase SPBC21H7.03c (463 aa).

The N-terminal stretch at 1–18 (MQLCIISLWFLAAFIVNA) is a signal peptide. The active-site Nucleophile is the His-69. N-linked (GlcNAc...) asparagine glycans are attached at residues Asn-98, Asn-104, Asn-221, and Asn-324. Catalysis depends on Asp-341, which acts as the Proton donor. N-linked (GlcNAc...) asparagine glycans are attached at residues Asn-439 and Asn-458.

It belongs to the histidine acid phosphatase family.

The protein resides in the secreted. It localises to the cell wall. The catalysed reaction is a phosphate monoester + H2O = an alcohol + phosphate. May dephosphorylate thiamine phosphates. In Schizosaccharomyces pombe (strain 972 / ATCC 24843) (Fission yeast), this protein is Thiamine-repressible acid phosphatase SPBC21H7.03c.